The following is a 204-amino-acid chain: Inositol diphosphatase DSP2 (204 aa).

The tract at residues 1–27 (MQLEISPRQRSQQQKEEEGEHQQRAGE) is disordered. The segment covering 13 to 27 (QQKEEEGEHQQRAGE) has biased composition (basic and acidic residues). One can recognise a Tyrosine-protein phosphatase domain in the interval 51–203 (NFAEVNDGIF…SSLMHLTASQ (153 aa)). The tract at residues 107–119 (FGIDGSKELLVNI) is WPD loop important for active site topology. 1D-myo-inositol hexakisphosphate contacts are provided by N118, I119, and K123. The active-site Phosphocysteine intermediate is the C143.

The protein belongs to the protein-tyrosine phosphatase family. Atypical dual-specificity phosphatase Siw14-like subfamily. In terms of tissue distribution, expressed in roots and young panicles.

The protein localises to the cytoplasm. It is found in the nucleus. The enzyme catalyses 5-diphospho-1D-myo-inositol 1,2,3,4,6-pentakisphosphate + H2O = 1D-myo-inositol hexakisphosphate + phosphate + H(+). It carries out the reaction 1,5-bis(diphospho)-1D-myo-inositol 2,3,4,6-tetrakisphosphate + H2O = 1-diphospho-1D-myo-inositol 2,3,4,5,6-pentakisphosphate + phosphate + 2 H(+). It catalyses the reaction 3,5-bis(diphospho)-1D-myo-inositol 1,2,4,6-tetrakisphosphate + H2O = 3-diphospho-1D-myo-inositol 1,2,4,5,6-pentakisphosphate + phosphate + 2 H(+). The catalysed reaction is 6-diphospho-1D-myo-inositol pentakisphosphate + H2O = 1D-myo-inositol hexakisphosphate + phosphate + H(+). Its function is as follows. Cleaves the beta-phosphate at the 5-position of soluble inositol pyrophosphates. Has highest activity on 5-diphosphoinositol 1,2,3,4,6-pentakisphosphate (5-InsP(7)). Acts as a negative regulator of defense responses against the fungal pathogen Magnaporthe oryzae. In Oryza sativa subsp. japonica (Rice), this protein is Inositol diphosphatase DSP2.